The sequence spans 443 residues: Xaa-Pro dipeptidase (443 aa).

Mn(2+)-binding residues include D246, D257, H339, E384, and E423.

This sequence belongs to the peptidase M24B family. Bacterial-type prolidase subfamily. Mn(2+) is required as a cofactor.

It catalyses the reaction Xaa-L-Pro dipeptide + H2O = an L-alpha-amino acid + L-proline. In terms of biological role, splits dipeptides with a prolyl residue in the C-terminal position. In Yersinia pseudotuberculosis serotype I (strain IP32953), this protein is Xaa-Pro dipeptidase.